The primary structure comprises 85 residues: Large ribosomal subunit protein bL27 (85 aa).

A disordered region spans residues 1-26; the sequence is MAHKKAGGSTRNGRDSESKRLGVKRF.

Belongs to the bacterial ribosomal protein bL27 family.

The sequence is that of Large ribosomal subunit protein bL27 from Saccharophagus degradans (strain 2-40 / ATCC 43961 / DSM 17024).